A 138-amino-acid chain; its full sequence is Acidic phospholipase A2 CH-E6' (138 aa).

An N-terminal signal peptide occupies residues 1–16 (MRTLWIVAVLLLGVEG). 7 disulfide bridges follow: cysteine 42–cysteine 131, cysteine 44–cysteine 60, cysteine 59–cysteine 111, cysteine 65–cysteine 138, cysteine 66–cysteine 104, cysteine 73–cysteine 97, and cysteine 91–cysteine 102. Ca(2+)-binding residues include tyrosine 43, glycine 45, and glycine 47. Residue histidine 63 is part of the active site. Position 64 (aspartate 64) interacts with Ca(2+). Aspartate 105 is an active-site residue.

The protein belongs to the phospholipase A2 family. Group II subfamily. D49 sub-subfamily. Ca(2+) is required as a cofactor. In terms of tissue distribution, expressed by the venom gland.

It is found in the secreted. The enzyme catalyses a 1,2-diacyl-sn-glycero-3-phosphocholine + H2O = a 1-acyl-sn-glycero-3-phosphocholine + a fatty acid + H(+). Snake venom phospholipase A2 (PLA2) that shows high lipolytic and weak ADP-induced platelet aggregation activities. Also shows weak anticoagulant activity. PLA2 catalyzes the calcium-dependent hydrolysis of the 2-acyl groups in 3-sn-phosphoglycerides. This Crotalus horridus (Timber rattlesnake) protein is Acidic phospholipase A2 CH-E6'.